A 298-amino-acid polypeptide reads, in one-letter code: Inosose dehydratase (298 aa).

It belongs to the IolE/MocC family. It depends on glutathione as a cofactor. Co(2+) serves as cofactor. The cofactor is Mn(2+).

The enzyme catalyses scyllo-inosose = 3D-3,5/4-trihydroxycyclohexane-1,2-dione + H2O. In terms of biological role, catalyzes the dehydration of inosose (2-keto-myo-inositol, 2KMI or 2,4,6/3,5-pentahydroxycyclohexanone) to 3D-(3,5/4)-trihydroxycyclohexane-1,2-dione (D-2,3-diketo-4-deoxy-epi-inositol). The chain is Inosose dehydratase from Yersinia enterocolitica serotype O:8 / biotype 1B (strain NCTC 13174 / 8081).